Here is a 453-residue protein sequence, read N- to C-terminus: UDP-N-acetylmuramate--L-alanine ligase (453 aa).

112–118 (GTHGKTT) contacts ATP.

This sequence belongs to the MurCDEF family.

It is found in the cytoplasm. The enzyme catalyses UDP-N-acetyl-alpha-D-muramate + L-alanine + ATP = UDP-N-acetyl-alpha-D-muramoyl-L-alanine + ADP + phosphate + H(+). Its pathway is cell wall biogenesis; peptidoglycan biosynthesis. Its function is as follows. Cell wall formation. The chain is UDP-N-acetylmuramate--L-alanine ligase from Lawsonia intracellularis (strain PHE/MN1-00).